Here is a 131-residue protein sequence, read N- to C-terminus: Small ribosomal subunit protein uS19 (131 aa).

This sequence belongs to the universal ribosomal protein uS19 family.

In terms of biological role, protein S19 forms a complex with S13 that binds strongly to the 16S ribosomal RNA. This chain is Small ribosomal subunit protein uS19, found in Cenarchaeum symbiosum (strain A).